A 168-amino-acid polypeptide reads, in one-letter code: Crossover junction endodeoxyribonuclease RuvC (168 aa).

Active-site residues include aspartate 9, glutamate 69, and aspartate 141. Residues aspartate 9, glutamate 69, and aspartate 141 each coordinate Mg(2+).

It belongs to the RuvC family. As to quaternary structure, homodimer which binds Holliday junction (HJ) DNA. The HJ becomes 2-fold symmetrical on binding to RuvC with unstacked arms; it has a different conformation from HJ DNA in complex with RuvA. In the full resolvosome a probable DNA-RuvA(4)-RuvB(12)-RuvC(2) complex forms which resolves the HJ. It depends on Mg(2+) as a cofactor.

It localises to the cytoplasm. The catalysed reaction is Endonucleolytic cleavage at a junction such as a reciprocal single-stranded crossover between two homologous DNA duplexes (Holliday junction).. In terms of biological role, the RuvA-RuvB-RuvC complex processes Holliday junction (HJ) DNA during genetic recombination and DNA repair. Endonuclease that resolves HJ intermediates. Cleaves cruciform DNA by making single-stranded nicks across the HJ at symmetrical positions within the homologous arms, yielding a 5'-phosphate and a 3'-hydroxyl group; requires a central core of homology in the junction. The consensus cleavage sequence is 5'-(A/T)TT(C/G)-3'. Cleavage occurs on the 3'-side of the TT dinucleotide at the point of strand exchange. HJ branch migration catalyzed by RuvA-RuvB allows RuvC to scan DNA until it finds its consensus sequence, where it cleaves and resolves the cruciform DNA. This is Crossover junction endodeoxyribonuclease RuvC from Bdellovibrio bacteriovorus (strain ATCC 15356 / DSM 50701 / NCIMB 9529 / HD100).